A 129-amino-acid chain; its full sequence is RxLR effector protein PexRD43 (129 aa).

Positions 1 to 16 (MRLAMILLSIPLFVSG) are cleaved as a signal peptide. Residues 44 to 56 (RSLRTSGEANEER) carry the RxLR-dEER motif.

Belongs to the RxLR effector family.

It localises to the secreted. It is found in the host cytoplasm. Its subcellular location is the host nucleus. Effector that enhances P.infestans colonization of Nicotiana benthamiana leaves. This Phytophthora infestans (strain T30-4) (Potato late blight agent) protein is RxLR effector protein PexRD43.